The sequence spans 508 residues: Protein adenylyltransferase Fic (508 aa).

A helical transmembrane segment spans residues 48–70 (FYRFALFFIAGSFAAFSFHALTS). TPR repeat units lie at residues 132–165 (ALGA…APKH) and 166–200 (PEVL…CPSN). Positions 257–262 (SVGIEG) match the Inhibitory (S/T)XXXE(G/N) motif motif. ATP-binding positions include E261 and 342–345 (VGGH). Residues 311-446 (ITIKDILELH…IRPFVRFIAD (136 aa)) enclose the Fido domain. H389 is an active-site residue. ATP contacts are provided by residues 393 to 400 (DGNGRTSR), 425 to 426 (YY), and N433.

It belongs to the fic family. As to quaternary structure, homodimer.

It localises to the membrane. It carries out the reaction L-tyrosyl-[protein] + ATP = O-(5'-adenylyl)-L-tyrosyl-[protein] + diphosphate. It catalyses the reaction L-threonyl-[protein] + ATP = 3-O-(5'-adenylyl)-L-threonyl-[protein] + diphosphate. The enzyme catalyses 3-O-(5'-adenylyl)-L-threonyl-[protein] + H2O = L-threonyl-[protein] + AMP + H(+). With respect to regulation, the side chain of Glu-261 determines which of the two opposing activities (AMPylase or de-AMPylase) will take place. In response to endoplasmic reticulum stress, mediates de-AMPylase activity. Adenylyltransferase activity is inhibited by the inhibitory helix present at the N-terminus: Glu-261 binds ATP and competes with ATP-binding at Arg-400, thereby preventing adenylyltransferase activity. In unstressed cells, disengagement of Glu-261 promotes adenylyltransferase activity. Activation dissociates ATP-binding from Glu-261, allowing ordered binding of the entire ATP moiety with the alpha-phosphate in an orientation that is productive for accepting an incoming target hydroxyl side chain. Its function is as follows. Protein that can both mediate the addition of adenosine 5'-monophosphate (AMP) to specific residues of target proteins (AMPylation), and the removal of the same modification from target proteins (de-AMPylation), depending on the context. The side chain of Glu-261 determines which of the two opposing activities (AMPylase or de-AMPylase) will take place. Acts as a key regulator of the unfolded protein response (UPR) by mediating AMPylation or de-AMPylation of Hsc70-3/BiP. In unstressed cells, acts as an adenylyltransferase by mediating AMPylation of Hsc70-3/BiP at 'Thr-518', thereby inactivating it. In response to endoplasmic reticulum stress, acts as a phosphodiesterase by mediating removal of ATP (de-AMPylation) from Hsc70-3/BiP at 'Thr-518', leading to restore HSPA5/BiP activity. This chain is Protein adenylyltransferase Fic, found in Drosophila persimilis (Fruit fly).